The chain runs to 358 residues: GDSL esterase/lipase At2g30220 (358 aa).

The signal sequence occupies residues 1–22 (MYISKTIVFGLFVATLLVSCNA). N-linked (GlcNAc...) asparagine glycosylation is present at asparagine 25. Serine 40 functions as the Nucleophile in the catalytic mechanism. N-linked (GlcNAc...) asparagine glycans are attached at residues asparagine 102 and asparagine 324. Residues aspartate 332 and histidine 335 contribute to the active site.

The protein belongs to the 'GDSL' lipolytic enzyme family.

The protein localises to the secreted. This chain is GDSL esterase/lipase At2g30220, found in Arabidopsis thaliana (Mouse-ear cress).